Consider the following 555-residue polypeptide: Protein tyrosine phosphatase-like protein egg-3 (555 aa).

2 consecutive short sequence motifs (D-box) follow at residues 96–99 (RILL) and 130–133 (RDRL). In terms of domain architecture, Tyrosine-protein phosphatase spans 207 to 514 (FVQEFNRLDR…LFIYRVILRW (308 aa)). An RXXL motif; required for cortical localization motif is present at residues 253–256 (RVKL). The short motif at 266–269 (RNEL) is the RXXL motif element. 2 short sequence motifs (RXXL motif; required for cortical localization) span residues 509-512 (RVIL) and 525-528 (RAAL).

This sequence belongs to the protein-tyrosine phosphatase family. Part of a complex, consisting of pseudophosphatases egg-3, egg-4, egg-5 and kinase mbk-2; this complex is required for the oocyte-to-zygote transition. Interacts (via tyrosine-protein phosphatase domain) with kinase mbk-2 (via N-terminus); the interaction does not affect mbk-2 kinase activity, is enhanced by mbk-2 tyrosine phosphorylation status and requires prior binding of mbk-2 to egg-4 and egg-5. Interacts with egg-4.

It localises to the cytoplasm. The protein localises to the cell cortex. In terms of biological role, probable pseudophosphatase required for the oocyte-to-zygote transition during which it regulates the polarized dispersal of the cortical actin cytoskeleton, the synthesis of the eggshell chitin layer and the formation of the polar bodies after meiosis I and II. Acts as a scaffold to tether kinase mbk-2 and pseudophosphatases egg-4 and egg-5 to the oocyte cortex and thus restricts mbk-2 activity to the cortex during meiosis I. Regulates mbk-2 localization to cytoplasmic foci during meiosis II. Also required for chitin synthase chs-1 localization to the cell cortex of unfertilized oocytes and to cytoplasmic foci in the fertilized embryo. The protein is Protein tyrosine phosphatase-like protein egg-3 of Caenorhabditis elegans.